Reading from the N-terminus, the 140-residue chain is Mitochondrial import receptor subunit TOM22 homolog (140 aa).

Residues 1–11 (MAAAAAGPGAP) show a composition bias toward low complexity. Residues 1–40 (MAAAAAGPGAPLSADELLPKGDAEKPEEELEEEDDEELDE) are disordered. Over 1–81 (MAAAAAGPGA…AQKMYRFSRA (81 aa)) the chain is Cytoplasmic. Ser13 carries the phosphoserine modification. Acidic residues predominate over residues 25–40 (KPEEELEEEDDEELDE). The tract at residues 39-48 (DETLSERLWG) is import sequence; necessary for mitochondrion outer membrane localization and integration in the TOM complex. Thr41 is subject to Phosphothreonine. Position 43 is a phosphoserine (Ser43). The interval 81–101 (AALWIGTTSFMILVLPVVFET) is TMD; necessary for mitochondrion outer membrane localization and integration in the TOM complex. A helical transmembrane segment spans residues 82 to 101 (ALWIGTTSFMILVLPVVFET). Residues 102 to 140 (EKLQMEQQQQLQQRQILLGPNTGLSGGMPGALPSLPGKI) are Mitochondrial intermembrane-facing. Residues 121–140 (PNTGLSGGMPGALPSLPGKI) are C-tail signal; necessary for mitochondrion outer membrane localization and integration in the TOM complex.

It belongs to the Tom22 family. In terms of assembly, forms part of the preprotein translocase complex of the outer mitochondrial membrane (TOM complex) which consists of at least 7 different proteins (TOMM5, TOMM6, TOMM7, TOMM20, TOMM22, TOMM40 and TOMM70). Interacts with PPP2R2B and TOMM40.

It is found in the mitochondrion outer membrane. Its function is as follows. Central receptor component of the translocase of the outer membrane of mitochondria (TOM complex) responsible for the recognition and translocation of cytosolically synthesized mitochondrial preproteins. Together with the peripheral receptor TOM20 functions as the transit peptide receptor and facilitates the movement of preproteins into the translocation pore. Required for the translocation across the mitochondrial outer membrane of cytochrome P450 monooxygenases. This is Mitochondrial import receptor subunit TOM22 homolog (TOMM22) from Bos taurus (Bovine).